A 131-amino-acid polypeptide reads, in one-letter code: Translation initiation factor 5A (131 aa).

A Hypusine modification is found at lysine 37.

Belongs to the eIF-5A family.

Its subcellular location is the cytoplasm. In terms of biological role, functions by promoting the formation of the first peptide bond. This is Translation initiation factor 5A (eIF5A) from Methanococcus maripaludis (strain C7 / ATCC BAA-1331).